The chain runs to 95 residues: 1,2-phenylacetyl-CoA epoxidase, subunit B (95 aa).

Homotrimer. Forms a stable heterodimer with PaaC. Probably forms an oligomer with PaaAC.

It participates in aromatic compound metabolism; phenylacetate degradation. In terms of biological role, component of 1,2-phenylacetyl-CoA epoxidase multicomponent enzyme system which catalyzes the reduction of phenylacetyl-CoA (PA-CoA) to form 1,2-epoxyphenylacetyl-CoA. The subunit B may play a regulatory role or be directly involved in electron transport. This chain is 1,2-phenylacetyl-CoA epoxidase, subunit B (paaB), found in Escherichia coli (strain K12).